A 1517-amino-acid polypeptide reads, in one-letter code: DNA-directed RNA polymerase subunit beta' (1517 aa).

C71, C73, C86, and C89 together coordinate Zn(2+). 3 residues coordinate Mg(2+): D482, D484, and D486. C812, C886, C893, and C896 together coordinate Zn(2+).

It belongs to the RNA polymerase beta' chain family. As to quaternary structure, the RNAP catalytic core consists of 2 alpha, 1 beta, 1 beta' and 1 omega subunit. When a sigma factor is associated with the core the holoenzyme is formed, which can initiate transcription. Requires Mg(2+) as cofactor. The cofactor is Zn(2+).

It catalyses the reaction RNA(n) + a ribonucleoside 5'-triphosphate = RNA(n+1) + diphosphate. Functionally, DNA-dependent RNA polymerase catalyzes the transcription of DNA into RNA using the four ribonucleoside triphosphates as substrates. This chain is DNA-directed RNA polymerase subunit beta', found in Campylobacter jejuni subsp. jejuni serotype O:23/36 (strain 81-176).